The primary structure comprises 743 residues: Tegument protein UL46 homolog (743 aa).

3 disordered regions span residues 437–481, 522–590, and 693–743; these read GCPP…VSSA, HQRS…SGYM, and RVRL…VSSL. The span at 526 to 552 shows a compositional bias: low complexity; it reads DSSSSDNSSCSSTETEYITISSTPSPT. 2 stretches are compositionally biased toward polar residues: residues 573 to 586 and 697 to 716; these read QPAN…SPAN and GTTT…TPSS. A compositionally biased stretch (low complexity) spans 722-743; that stretch reads RTLSTSESPESSPEQQERVSSL.

The protein belongs to the herpesviridae HHV-1 VP11/12 protein family. In terms of assembly, interacts with VP16.

Its subcellular location is the virion tegument. The protein resides in the host cell membrane. Functionally, abundant tegument protein. Trans-activates the immediate early genes. This Equus caballus (Horse) protein is Tegument protein UL46 homolog.